A 374-amino-acid chain; its full sequence is Fatty acid conjugase FAC2 A (374 aa).

The next 2 membrane-spanning stretches (helical) occupy residues 50 to 70 and 74 to 94; these read IIVT…LPGF and IVWP…WMIG. The short motif at 95 to 99 is the Histidine box-1 element; that stretch reads HECGH. The Histidine box-2 signature appears at 131-135; sequence HRNHH. 3 helical membrane-spanning segments follow: residues 168-188, 219-239, and 246-266; these read MGLM…YIMF, VLFS…IVMV, and FYVY…ATYL. The short motif at 306-310 is the Histidine box-3 element; the sequence is HVIHH.

Belongs to the fatty acid desaturase type 1 family. As to expression, expressed exclusively in the developing seeds. Not detected in leaves or flower buds.

The protein localises to the microsome membrane. It carries out the reaction a (9Z,12Z)-octadecadienoyl-containing glycerolipid + AH2 + O2 = a (8E,10E,12Z)-octadecatrienoyl-containing glycerolipid + A + 2 H2O. Its pathway is lipid metabolism; polyunsaturated fatty acid biosynthesis. In terms of biological role, fatty acid conjugase converting 18:2(9Z, 12Z) to calendic acid 18:3(8E, 10E, 12Z). Converts alpha-linolenic acid (18:3(9Z, 12Z, 15Z)) into 18:4(8E, 10E, 12Z, 15Z). Also has weak activity on the mono-unsaturates 16:1(9Z) and 18:1(9Z) producing two conjugated double bonds at delta(8) and delta(10) position. This is Fatty acid conjugase FAC2 A from Calendula officinalis (Pot marigold).